The following is a 466-amino-acid chain: ATP-dependent protease ATPase subunit HslU (466 aa).

Residues isoleucine 18, 60 to 65, aspartate 279, glutamate 344, and arginine 416 contribute to the ATP site; that span reads GVGKTE.

The protein belongs to the ClpX chaperone family. HslU subfamily. As to quaternary structure, a double ring-shaped homohexamer of HslV is capped on each side by a ring-shaped HslU homohexamer. The assembly of the HslU/HslV complex is dependent on binding of ATP.

The protein resides in the cytoplasm. Functionally, ATPase subunit of a proteasome-like degradation complex; this subunit has chaperone activity. The binding of ATP and its subsequent hydrolysis by HslU are essential for unfolding of protein substrates subsequently hydrolyzed by HslV. HslU recognizes the N-terminal part of its protein substrates and unfolds these before they are guided to HslV for hydrolysis. This chain is ATP-dependent protease ATPase subunit HslU, found in Lactobacillus acidophilus (strain ATCC 700396 / NCK56 / N2 / NCFM).